Reading from the N-terminus, the 103-residue chain is MSGRGKGGKGLGKGGAKRHRKVLRDNIQGITKPAIRRLARRGGVKRISGLIYEETRTVLKTFLENVIRDSVTYTEHARRKTVTAMDVVYALKRQGRTLYGFGG.

The span at 1–14 (MSGRGKGGKGLGKG) shows a compositional bias: gly residues. The segment at 1–20 (MSGRGKGGKGLGKGGAKRHR) is disordered. Residues 17–21 (KRHRK) mediate DNA binding.

This sequence belongs to the histone H4 family. In terms of assembly, the nucleosome is a histone octamer containing two molecules each of H2A, H2B, H3 and H4 assembled in one H3-H4 heterotetramer and two H2A-H2B heterodimers. The octamer wraps approximately 147 bp of DNA.

The protein localises to the nucleus. It localises to the chromosome. Its function is as follows. Core component of nucleosome. Nucleosomes wrap and compact DNA into chromatin, limiting DNA accessibility to the cellular machineries which require DNA as a template. Histones thereby play a central role in transcription regulation, DNA repair, DNA replication and chromosomal stability. DNA accessibility is regulated via a complex set of post-translational modifications of histones, also called histone code, and nucleosome remodeling. This chain is Histone H4 (H4-I), found in Chlamydomonas reinhardtii (Chlamydomonas smithii).